The following is a 358-amino-acid chain: Sulfate/thiosulfate import ATP-binding protein CysA 1 (358 aa).

An ABC transporter domain is found at 3-237 (IQVENIRKAF…PASAFVYGFL (235 aa)). 35 to 42 (GPSGCGKT) is a binding site for ATP.

This sequence belongs to the ABC transporter superfamily. Sulfate/tungstate importer (TC 3.A.1.6) family. In terms of assembly, the complex is composed of two ATP-binding proteins (CysA), two transmembrane proteins (CysT and CysW) and a solute-binding protein (CysP).

The protein localises to the cell inner membrane. It catalyses the reaction sulfate(out) + ATP + H2O = sulfate(in) + ADP + phosphate + H(+). The enzyme catalyses thiosulfate(out) + ATP + H2O = thiosulfate(in) + ADP + phosphate + H(+). Functionally, part of the ABC transporter complex CysAWTP involved in sulfate/thiosulfate import. Responsible for energy coupling to the transport system. This is Sulfate/thiosulfate import ATP-binding protein CysA 1 from Chromobacterium violaceum (strain ATCC 12472 / DSM 30191 / JCM 1249 / CCUG 213 / NBRC 12614 / NCIMB 9131 / NCTC 9757 / MK).